Here is a 491-residue protein sequence, read N- to C-terminus: Probable glycogen synthase 2 (491 aa).

Lys-15 lines the ADP-alpha-D-glucose pocket.

This sequence belongs to the glycosyltransferase 1 family. Bacterial/plant glycogen synthase subfamily.

It carries out the reaction [(1-&gt;4)-alpha-D-glucosyl](n) + ADP-alpha-D-glucose = [(1-&gt;4)-alpha-D-glucosyl](n+1) + ADP + H(+). The protein operates within glycan biosynthesis; glycogen biosynthesis. Synthesizes alpha-1,4-glucan chains using ADP-glucose. In Synechocystis sp. (strain ATCC 27184 / PCC 6803 / Kazusa), this protein is Probable glycogen synthase 2 (glgA2).